Consider the following 318-residue polypeptide: Cell growth regulator with EF hand domain protein 1 (318 aa).

The signal sequence occupies residues 1-19 (MLPLTMTVLILLLLPTGQA). EF-hand domains lie at 69–104 (SREQ…ALAP) and 114–149 (PVIL…ALRH). Residues Asp82, Asp84, Ser86, Gln88, Glu93, Asp127, Asn129, Asp131, and Glu138 each contribute to the Ca(2+) site. The segment at 177–318 (LRQETQEAPG…HIVQVENDEI (142 aa)) is disordered. Composition is skewed to basic and acidic residues over residues 186–202 (GPRE…RESL) and 223–233 (GEAEGQAEAKG). 3 consecutive repeat copies span residues 219-235 (PGPR…KGDA), 236-252 (PGPR…EGDA), and 253-269 (PGPR…EGDA). A 4 X 17 AA approximate tandem repeats of P-G-P-R-G-E-A-G-G-Q-A-E-A-[KR]-G-D-A region spans residues 219-286 (PGPRGEAEGQ…GGQAEARENG (68 aa)). The segment covering 235–272 (APGPRGEAGGQAEAEGDAPGPRGEAGGQAEAEGDAPGP) has biased composition (low complexity). The stretch at 270–286 (PGPRGEAGGQAEARENG) is one 4; approximate repeat. Positions 281–293 (EARENGEEAKELP) are enriched in basic and acidic residues.

Probably digested extracellularly by an unknown serine protease generating extremely hydrophobic bioactive peptides.

The protein localises to the secreted. Functionally, mediates cell-cell adhesion in a calcium-dependent manner. Able to inhibit growth in several cell lines. The chain is Cell growth regulator with EF hand domain protein 1 from Homo sapiens (Human).